The following is a 734-amino-acid chain: Photosystem I P700 chlorophyll a apoprotein A2 (734 aa).

The next 8 membrane-spanning stretches (helical) occupy residues 46-69, 135-158, 175-199, 273-291, 330-353, 369-395, 417-439, and 517-535; these read IFAS…FHVA, LYTG…LHLQ, LNHH…HVAI, IAHH…GHMY, LHFQ…QHIY, AALY…IFFI, AIIS…LYVH, and FLVH…LILV. Residues Cys559 and Cys568 each coordinate [4Fe-4S] cluster. Transmembrane regions (helical) follow at residues 575–596 and 643–665; these read AFYL…YWHW and LSVW…MFLI. His654, Met662, and Tyr670 together coordinate chlorophyll a. Position 671 (Trp671) interacts with phylloquinone. The helical transmembrane segment at 707–727 threads the bilayer; the sequence is LVGLAHFSVGYIFTYAAFLIA.

This sequence belongs to the PsaA/PsaB family. In terms of assembly, the PsaA/B heterodimer binds the P700 chlorophyll special pair and subsequent electron acceptors. PSI consists of a core antenna complex that captures photons, and an electron transfer chain that converts photonic excitation into a charge separation. The eukaryotic PSI reaction center is composed of at least 11 subunits. It depends on P700 is a chlorophyll a/chlorophyll a' dimer, A0 is one or more chlorophyll a, A1 is one or both phylloquinones and FX is a shared 4Fe-4S iron-sulfur center. as a cofactor.

The protein resides in the plastid. Its subcellular location is the chloroplast thylakoid membrane. The enzyme catalyses reduced [plastocyanin] + hnu + oxidized [2Fe-2S]-[ferredoxin] = oxidized [plastocyanin] + reduced [2Fe-2S]-[ferredoxin]. PsaA and PsaB bind P700, the primary electron donor of photosystem I (PSI), as well as the electron acceptors A0, A1 and FX. PSI is a plastocyanin-ferredoxin oxidoreductase, converting photonic excitation into a charge separation, which transfers an electron from the donor P700 chlorophyll pair to the spectroscopically characterized acceptors A0, A1, FX, FA and FB in turn. Oxidized P700 is reduced on the lumenal side of the thylakoid membrane by plastocyanin. The sequence is that of Photosystem I P700 chlorophyll a apoprotein A2 from Staurastrum punctulatum (Green alga).